Reading from the N-terminus, the 212-residue chain is Thymidylate kinase (212 aa).

11 to 18 (GPDGAGKS) serves as a coordination point for ATP.

This sequence belongs to the thymidylate kinase family.

It carries out the reaction dTMP + ATP = dTDP + ADP. Phosphorylation of dTMP to form dTDP in both de novo and salvage pathways of dTTP synthesis. This is Thymidylate kinase from Streptococcus gordonii (strain Challis / ATCC 35105 / BCRC 15272 / CH1 / DL1 / V288).